Consider the following 162-residue polypeptide: ATP synthase subunit b (162 aa).

A helical transmembrane segment spans residues 6 to 25 (TLFTLVTFLVLMLAVGKVAW).

This sequence belongs to the ATPase B chain family. In terms of assembly, F-type ATPases have 2 components, F(1) - the catalytic core - and F(0) - the membrane proton channel. F(1) has five subunits: alpha(3), beta(3), gamma(1), delta(1), epsilon(1). F(0) has three main subunits: a(1), b(2) and c(10-14). The alpha and beta chains form an alternating ring which encloses part of the gamma chain. F(1) is attached to F(0) by a central stalk formed by the gamma and epsilon chains, while a peripheral stalk is formed by the delta and b chains.

It is found in the cell membrane. In terms of biological role, f(1)F(0) ATP synthase produces ATP from ADP in the presence of a proton or sodium gradient. F-type ATPases consist of two structural domains, F(1) containing the extramembraneous catalytic core and F(0) containing the membrane proton channel, linked together by a central stalk and a peripheral stalk. During catalysis, ATP synthesis in the catalytic domain of F(1) is coupled via a rotary mechanism of the central stalk subunits to proton translocation. Its function is as follows. Component of the F(0) channel, it forms part of the peripheral stalk, linking F(1) to F(0). This Lacticaseibacillus casei (strain BL23) (Lactobacillus casei) protein is ATP synthase subunit b.